Here is a 183-residue protein sequence, read N- to C-terminus: Hypoxanthine/guanine phosphoribosyltransferase (183 aa).

This sequence belongs to the purine/pyrimidine phosphoribosyltransferase family. Archaeal HPRT subfamily. In terms of assembly, homodimer.

The protein resides in the cytoplasm. It carries out the reaction IMP + diphosphate = hypoxanthine + 5-phospho-alpha-D-ribose 1-diphosphate. It catalyses the reaction GMP + diphosphate = guanine + 5-phospho-alpha-D-ribose 1-diphosphate. It functions in the pathway purine metabolism; IMP biosynthesis via salvage pathway; IMP from hypoxanthine: step 1/1. In terms of biological role, catalyzes a salvage reaction resulting in the formation of IMP that is energically less costly than de novo synthesis. The protein is Hypoxanthine/guanine phosphoribosyltransferase of Methanocaldococcus infernus (strain DSM 11812 / JCM 15783 / ME).